A 416-amino-acid polypeptide reads, in one-letter code: D-amino acid dehydrogenase 2 (416 aa).

5–19 (VCIIGAGVVGLATAY) contacts FAD.

This sequence belongs to the DadA oxidoreductase family. FAD serves as cofactor.

The enzyme catalyses a D-alpha-amino acid + A + H2O = a 2-oxocarboxylate + AH2 + NH4(+). Its function is as follows. Oxidative deamination of D-amino acids. This is D-amino acid dehydrogenase 2 (dadA2) from Pseudomonas aeruginosa (strain ATCC 15692 / DSM 22644 / CIP 104116 / JCM 14847 / LMG 12228 / 1C / PRS 101 / PAO1).